The following is a 496-amino-acid chain: Probable cytosol aminopeptidase (496 aa).

Mn(2+) contacts are provided by lysine 266 and aspartate 271. Lysine 278 is an active-site residue. Mn(2+) contacts are provided by aspartate 289, aspartate 348, and glutamate 350. The active site involves arginine 352.

The protein belongs to the peptidase M17 family. The cofactor is Mn(2+).

It is found in the cytoplasm. The enzyme catalyses Release of an N-terminal amino acid, Xaa-|-Yaa-, in which Xaa is preferably Leu, but may be other amino acids including Pro although not Arg or Lys, and Yaa may be Pro. Amino acid amides and methyl esters are also readily hydrolyzed, but rates on arylamides are exceedingly low.. It catalyses the reaction Release of an N-terminal amino acid, preferentially leucine, but not glutamic or aspartic acids.. Its function is as follows. Presumably involved in the processing and regular turnover of intracellular proteins. Catalyzes the removal of unsubstituted N-terminal amino acids from various peptides. The sequence is that of Probable cytosol aminopeptidase from Pseudomonas fluorescens (strain Pf0-1).